Reading from the N-terminus, the 157-residue chain is UPF0262 protein RHECIAT_CH0000657 (157 aa).

It belongs to the UPF0262 family.

The chain is UPF0262 protein RHECIAT_CH0000657 from Rhizobium etli (strain CIAT 652).